Consider the following 277-residue polypeptide: Prohibitin-3, mitochondrial (277 aa).

N-acetylglycine is present on Gly2. The Mitochondrial matrix segment spans residues 2-6 (GSQQA). A helical; Signal-anchor for type II membrane protein membrane pass occupies residues 7-28 (AVSFLSNLAKAAFGLGTAATVL). Over 29–277 (NTSLFTVDGG…GQSMLFALNR (249 aa)) the chain is Mitochondrial intermembrane.

This sequence belongs to the prohibitin family. Component of a prohibitin multimeric complex in mitochondrial membranes. As to expression, mostly expressed in proliferative tissues, including vasculature, shoot and root apical tissues. Expressed in roots, stems, leaves and flowers (at protein level).

Its subcellular location is the cell membrane. It is found in the mitochondrion inner membrane. The protein localises to the nucleus. The protein resides in the cytoplasm. In terms of biological role, prohibitin probably acts as a holdase/unfoldase for the stabilization of newly synthesized mitochondrial proteins. Necessary for mitochondrial and cell metabolism and biogenesis. Required to regulate the ethylene-mediated signaling; involved in growth maintenance in the presence of ethylene. Functions in nitric oxide (NO)-mediated responses and in hydrogen peroxide-induced NO accumulation. This chain is Prohibitin-3, mitochondrial (PHB3), found in Arabidopsis thaliana (Mouse-ear cress).